The following is a 576-amino-acid chain: Putative diflavin flavoprotein A 1 (576 aa).

Positions 48-240 (RNGTTYNSFL…LAIKTVATGH (193 aa)) are zinc metallo-hydrolase. Residues His-97, Glu-99, Asp-101, His-164, Asp-183, and His-240 each coordinate Fe cation. The region spanning 269–431 (VALFYAEDYG…DLEKALGRIS (163 aa)) is the Flavodoxin-like domain. The flavodoxin-reductase-like stretch occupies residues 432–576 (TGLYIITTKK…VHHRKVGNHY (145 aa)).

In the N-terminal section; belongs to the zinc metallo-hydrolase group 3 family. It in the C-terminal section; belongs to the flavodoxin reductase family. The cofactor is Fe cation.

Its function is as follows. Mediates electron transfer from NADH to oxygen, reducing it to water. This modular protein has 3 redox cofactors, in other organisms the same activity requires 2 or 3 proteins. This Nostoc sp. (strain PCC 7120 / SAG 25.82 / UTEX 2576) protein is Putative diflavin flavoprotein A 1 (dfa1).